Here is a 361-residue protein sequence, read N- to C-terminus: Peptide chain release factor 1 (361 aa).

Q235 is subject to N5-methylglutamine.

This sequence belongs to the prokaryotic/mitochondrial release factor family. In terms of processing, methylated by PrmC. Methylation increases the termination efficiency of RF1.

The protein resides in the cytoplasm. Functionally, peptide chain release factor 1 directs the termination of translation in response to the peptide chain termination codons UAG and UAA. The protein is Peptide chain release factor 1 of Azoarcus sp. (strain BH72).